The sequence spans 98 residues: MPTFTKEEIVHLGDLARIALTDEEITRLQGDLNVIAESINKVQEVATDDVEPTANPVPLEAYLRPDVPETPLTQAEATAGAPVSEAGMFVAPRILGQE.

Belongs to the GatC family. Heterotrimer of A, B and C subunits.

The catalysed reaction is L-glutamyl-tRNA(Gln) + L-glutamine + ATP + H2O = L-glutaminyl-tRNA(Gln) + L-glutamate + ADP + phosphate + H(+). It carries out the reaction L-aspartyl-tRNA(Asn) + L-glutamine + ATP + H2O = L-asparaginyl-tRNA(Asn) + L-glutamate + ADP + phosphate + 2 H(+). In terms of biological role, allows the formation of correctly charged Asn-tRNA(Asn) or Gln-tRNA(Gln) through the transamidation of misacylated Asp-tRNA(Asn) or Glu-tRNA(Gln) in organisms which lack either or both of asparaginyl-tRNA or glutaminyl-tRNA synthetases. The reaction takes place in the presence of glutamine and ATP through an activated phospho-Asp-tRNA(Asn) or phospho-Glu-tRNA(Gln). The sequence is that of Aspartyl/glutamyl-tRNA(Asn/Gln) amidotransferase subunit C from Bifidobacterium adolescentis (strain ATCC 15703 / DSM 20083 / NCTC 11814 / E194a).